The sequence spans 441 residues: 3'-N-debenzoyl-2'-deoxytaxol N-benzoyltransferase (441 aa).

Active-site proton acceptor residues include His-163 and Asp-373.

Belongs to the plant acyltransferase family.

It catalyses the reaction 3'-N-debenzoyltaxol + benzoyl-CoA = paclitaxel + CoA + H(+). Its pathway is alkaloid biosynthesis; taxol biosynthesis. Its function is as follows. Catalyzes the stereoselective coupling of the surrogate substrate N-debenzoyl-(3'RS)-2'-deoxytaxol with benzoyl-CoA to form predominantly one 3'-epimer of 2'-deoxytaxol. This enzymatic reaction constitutes the final acylation in the taxol biosynthetic pathway. The protein is 3'-N-debenzoyl-2'-deoxytaxol N-benzoyltransferase of Taxus canadensis (Canadian yew).